The sequence spans 471 residues: Zinc finger protein 385B (471 aa).

Positions 1-93 are required for induction of apoptosis; that stretch reads MNMANFLRGF…TGSTCHTTTL (93 aa). Residues 34 to 64 form a Matrin-type 1 zinc finger; it reads SFCEVCNIQLNSAAQAQVHSNGKSHRKRVKQ. Disordered stretches follow at residues 50 to 92 and 175 to 275; these read QVHS…HTTT and HYKG…TVVE. The span at 76 to 92 shows a compositional bias: low complexity; the sequence is ASPSSNSSTGSTCHTTT. Positions 94–471 are interaction with p53/TP53; it reads PALVRTPTLM…TPASILFAPY (378 aa). A Matrin-type 2 zinc finger spans residues 157 to 187; sequence ISCNVCQLRFNSDSQAEAHYKGSKHAKKVKA. Positions 206-220 are enriched in polar residues; that stretch reads ANPSCSITPITGNNS. A compositionally biased stretch (low complexity) spans 230-250; that stretch reads KASSSSQPSSSESGSFLLKSG. Residues 260–269 show a composition bias toward polar residues; the sequence is TSPSKSTNGA. The Matrin-type 3 zinc-finger motif lies at 282 to 316; the sequence is KKLLYCSLCKVAVNSLSQLEAHNTGSKHKTMVEAR. The interval 318–340 is disordered; the sequence is GAGPIKSYPRPGSRLKMQNGSKG. A Matrin-type 4 zinc finger spans residues 348 to 378; the sequence is FHCEICDVHVNSEIQLKQHISSRRHKDRVAG.

Interacts with p53/TP53; the interaction is direct. As to expression, detected in germinal center of lymph node (at protein level). Expressed in spleen, lymph node and tonsil.

Its subcellular location is the nucleus. In terms of biological role, may play a role in p53/TP53-mediated apoptosis. The polypeptide is Zinc finger protein 385B (ZNF385B) (Homo sapiens (Human)).